The following is a 937-amino-acid chain: Periplasmic nitrate reductase (937 aa).

Residues 1-31 (MSMNRREFLKTTAAAAAASAVGISIPSEAKA) constitute a signal peptide (tat-type signal). In terms of domain architecture, 4Fe-4S Mo/W bis-MGD-type spans 40–96 (WQWDKAVCRFCGTGCGIMVAVKDDKIVAVKGDPESPVNRGINCIKGYFNAKIMYGAD). [4Fe-4S] cluster contacts are provided by C47, C50, C54, and C82. Mo-bis(molybdopterin guanine dinucleotide) is bound by residues K84, Q152, N177, C181, 214-221 (WGANMAEM), M422, Q426, N532, K580, D607, and 827-836 (TGRVLEHWHS). W903 contacts substrate. 2 residues coordinate Mo-bis(molybdopterin guanine dinucleotide): N911 and K928.

It belongs to the prokaryotic molybdopterin-containing oxidoreductase family. NasA/NapA/NarB subfamily. Component of the periplasmic nitrate reductase NapAB complex composed of NapA and NapB. [4Fe-4S] cluster serves as cofactor. Requires Mo-bis(molybdopterin guanine dinucleotide) as cofactor. In terms of processing, predicted to be exported by the Tat system. The position of the signal peptide cleavage has not been experimentally proven.

The protein resides in the periplasm. It carries out the reaction 2 Fe(II)-[cytochrome] + nitrate + 2 H(+) = 2 Fe(III)-[cytochrome] + nitrite + H2O. Its function is as follows. Catalytic subunit of the periplasmic nitrate reductase complex NapAB. Receives electrons from NapB and catalyzes the reduction of nitrate to nitrite. The chain is Periplasmic nitrate reductase from Nautilia profundicola (strain ATCC BAA-1463 / DSM 18972 / AmH).